Reading from the N-terminus, the 478-residue chain is SPbeta prophage-derived uncharacterized protein YonD (478 aa).

Residues 326 to 419 (IQSQLNQKDE…KFSTEEVQNL (94 aa)) adopt a coiled-coil conformation.

In Bacillus subtilis (strain 168), this protein is SPbeta prophage-derived uncharacterized protein YonD (yonD).